The sequence spans 216 residues: Uracil phosphoribosyltransferase (216 aa).

5-phospho-alpha-D-ribose 1-diphosphate-binding positions include R85, R110, and 135-143 (DPMVATGYS). Residues I200 and 205–207 (GDA) contribute to the uracil site. Position 206 (D206) interacts with 5-phospho-alpha-D-ribose 1-diphosphate.

Belongs to the UPRTase family. Mg(2+) is required as a cofactor.

The enzyme catalyses UMP + diphosphate = 5-phospho-alpha-D-ribose 1-diphosphate + uracil. It functions in the pathway pyrimidine metabolism; UMP biosynthesis via salvage pathway; UMP from uracil: step 1/1. Allosterically activated by GTP. Its function is as follows. Catalyzes the conversion of uracil and 5-phospho-alpha-D-ribose 1-diphosphate (PRPP) to UMP and diphosphate. This Paraburkholderia xenovorans (strain LB400) protein is Uracil phosphoribosyltransferase.